Consider the following 316-residue polypeptide: HPr kinase/phosphorylase (316 aa).

Active-site residues include His-143 and Lys-164. ATP is bound at residue 158–165 (GEAGSGKS). Ser-165 is a Mg(2+) binding site. Catalysis depends on Asp-182, which acts as the Proton acceptor; for phosphorylation activity. Proton donor; for dephosphorylation activity. Residues 206 to 215 (LEVRGLGVLN) form an important for the catalytic mechanism of both phosphorylation and dephosphorylation region. Glu-207 contributes to the Mg(2+) binding site. Arg-251 is an active-site residue. The interval 272 to 277 (PVMPGR) is important for the catalytic mechanism of dephosphorylation.

Belongs to the HPrK/P family. As to quaternary structure, homohexamer. It depends on Mg(2+) as a cofactor.

The enzyme catalyses [HPr protein]-L-serine + ATP = [HPr protein]-O-phospho-L-serine + ADP + H(+). It catalyses the reaction [HPr protein]-O-phospho-L-serine + phosphate + H(+) = [HPr protein]-L-serine + diphosphate. Catalyzes the ATP- as well as the pyrophosphate-dependent phosphorylation of a specific serine residue in HPr, a phosphocarrier protein of the phosphoenolpyruvate-dependent sugar phosphotransferase system (PTS). HprK/P also catalyzes the pyrophosphate-producing, inorganic phosphate-dependent dephosphorylation (phosphorolysis) of seryl-phosphorylated HPr (P-Ser-HPr). This is HPr kinase/phosphorylase from Xanthomonas oryzae pv. oryzae (strain MAFF 311018).